Here is a 602-residue protein sequence, read N- to C-terminus: Adenylosuccinate synthetase (602 aa).

Residues 74 to 80 (GDEGKGK) and 104 to 106 (GHT) each bind GTP. Asp75 (proton acceptor) is an active-site residue. Mg(2+) is bound by residues Asp75 and Gly104. IMP-binding positions include 75-78 (DEGK), 102-105 (NAGH), Thr189, Lys203, Gln315, Thr331, and Lys459. The Proton donor role is filled by His105. 455–461 (AVTKKPR) contributes to the substrate binding site. GTP is bound by residues Arg461 and 589-591 (GNG).

The protein belongs to the adenylosuccinate synthetase family. As to quaternary structure, homodimer. The cofactor is Mg(2+).

The protein localises to the cytoplasm. The enzyme catalyses IMP + L-aspartate + GTP = N(6)-(1,2-dicarboxyethyl)-AMP + GDP + phosphate + 2 H(+). It participates in purine metabolism; AMP biosynthesis via de novo pathway; AMP from IMP: step 1/2. Its function is as follows. Plays an important role in the salvage pathway for purine nucleotide biosynthesis. Catalyzes the first committed step in the biosynthesis of AMP from IMP. This chain is Adenylosuccinate synthetase, found in Trypanosoma brucei brucei (strain 927/4 GUTat10.1).